Consider the following 138-residue polypeptide: Fusaristatin A biosynthesis cluster protein FGSG_08206 (138 aa).

The region spanning 33 to 130 (VHRVTMFKMP…TIDGMMTVFF (98 aa)) is the Stress-response A/B barrel domain.

It functions in the pathway secondary metabolite biosynthesis. Part of the gene cluster that mediates the biosynthesis of the lipopeptide fusaristatin A. Fusaristatin A consists of a polyketide chain linked to three amino acid residues glutamine (Gln), dehydroalanine (dehydro-Ala), and beta-aminoisobutyric acid. The biosynthesis starts with formation of a linear polyketide chain by the highly reducing polyketide synthase PKS6. The gene cluster does not contain an acyl-CoA ligase or an acyl-transferase, and it is therefore predicted that the polyketide is transferred directly to the nonribosomal peptide synthetase NRPS7. Modules 1-3 from NRPS7 incorporate dehydro-Ala, Gln, and beta-aminoisobutyric acid in the compound, which is released by cyclization. The beta-aminoisobutyric acid units are most likely not freely available to the NRPS, but can be synthesized from thymine, which requires a dehydrogenase, a monooxygenase, and an aminotransferase. The fusaristatin A cluster contains a cytochrome P450 monooxygenase (FGSG_08207) and an aminotransferase (FGSG_17085), which theoretically can perform two of the enzymatic steps. The enzymes may however also be involved in biosynthesis of dehydroalanine or modification of the polyketide. The dehydro-Ala residue can be a result of cyclization, where serine is dehydrated. The last gene of the cluster encodes a protein with an A/B barrel domain found in variable enzymes, which hampers functional prediction. This is Fusaristatin A biosynthesis cluster protein FGSG_08206 from Gibberella zeae (strain ATCC MYA-4620 / CBS 123657 / FGSC 9075 / NRRL 31084 / PH-1) (Wheat head blight fungus).